Consider the following 456-residue polypeptide: Vitamin K-dependent protein C (456 aa).

The N-terminal stretch at 1 to 20 is a signal peptide; that stretch reads MWQLASLSLLLTICGTCSTA. Positions 21-42 are excised as a propeptide; that stretch reads APPGSVFSSSESAHQVLRIRKR. The Gla domain maps to 47-88; the sequence is LEEIRAGSLERECMEEICDFEEAKEIFQNVDDTLAYWSKYVD. Glu-48, Glu-49, Glu-56, Glu-58, Glu-61, Glu-62, Glu-67, Glu-68, and Glu-71 each carry 4-carboxyglutamate. Cys-59 and Cys-64 form a disulfide bridge. 4 disulfides stabilise this stretch: Cys-92-Cys-111, Cys-101-Cys-106, Cys-105-Cys-120, and Cys-122-Cys-131. EGF-like domains are found at residues 97-132 and 136-176; these read PEHA…RFCQ and SYIN…LQCQ. Asp-113 carries the post-translational modification (3R)-3-hydroxyaspartate. N-linked (GlcNAc...) asparagine glycosylation occurs at Asn-139. 5 cysteine pairs are disulfide-bonded: Cys-140–Cys-151, Cys-147–Cys-160, Cys-162–Cys-175, Cys-183–Cys-318, and Cys-237–Cys-253. The N-linked (GlcNAc...) asparagine glycan is linked to Asn-202. A Peptidase S1 domain is found at 211 to 445; the sequence is LVNGKVTRRG…YLDWIHSHIR (235 aa). The Charge relay system role is filled by His-252. Asn-289 carries N-linked (GlcNAc...) asparagine glycosylation. Asp-298 (charge relay system) is an active-site residue. Asn-350 is a glycosylation site (N-linked (GlcNAc...) asparagine). Intrachain disulfides connect Cys-368–Cys-382 and Cys-393–Cys-421. Ser-397 functions as the Charge relay system in the catalytic mechanism.

This sequence belongs to the peptidase S1 family. Synthesized as a single chain precursor, which is cleaved into a light chain and a heavy chain held together by a disulfide bond. The enzyme is then activated by thrombin, which cleaves a tetradecapeptide from the amino end of the heavy chain; this reaction, which occurs at the surface of endothelial cells, is strongly promoted by thrombomodulin. The vitamin K-dependent, enzymatic carboxylation of some Glu residues allows the modified protein to bind calcium. In terms of processing, the iron and 2-oxoglutarate dependent 3-hydroxylation of aspartate and asparagine is (R) stereospecific within EGF domains. Plasma; synthesized in the liver.

The protein localises to the secreted. It is found in the golgi apparatus. It localises to the endoplasmic reticulum. It carries out the reaction Degradation of blood coagulation factors Va and VIIIa.. Functionally, protein C is a vitamin K-dependent serine protease that regulates blood coagulation by inactivating factors Va and VIIIa in the presence of calcium ions and phospholipids. Exerts a protective effect on the endothelial cell barrier function. This Canis lupus familiaris (Dog) protein is Vitamin K-dependent protein C (PROC).